The following is a 362-amino-acid chain: Ferrochelatase (362 aa).

The Fe cation site is built by histidine 212 and glutamate 294.

This sequence belongs to the ferrochelatase family.

Its subcellular location is the cytoplasm. The enzyme catalyses heme b + 2 H(+) = protoporphyrin IX + Fe(2+). It participates in porphyrin-containing compound metabolism; protoheme biosynthesis; protoheme from protoporphyrin-IX: step 1/1. Functionally, catalyzes the ferrous insertion into protoporphyrin IX. The sequence is that of Ferrochelatase from Leptospira biflexa.